A 378-amino-acid polypeptide reads, in one-letter code: Putative glutamate--cysteine ligase 2 (378 aa).

Belongs to the glutamate--cysteine ligase type 2 family. YbdK subfamily.

It carries out the reaction L-cysteine + L-glutamate + ATP = gamma-L-glutamyl-L-cysteine + ADP + phosphate + H(+). In terms of biological role, ATP-dependent carboxylate-amine ligase which exhibits weak glutamate--cysteine ligase activity. The polypeptide is Putative glutamate--cysteine ligase 2 (Salinispora arenicola (strain CNS-205)).